The primary structure comprises 389 residues: Allantoicase (389 aa).

Belongs to the allantoicase family.

It catalyses the reaction allantoate + H2O = (S)-ureidoglycolate + urea. The protein operates within nitrogen metabolism; (S)-allantoin degradation; (S)-ureidoglycolate from allantoate (aminidohydrolase route): step 1/1. Functionally, utilization of purines as secondary nitrogen sources, when primary sources are limiting. The polypeptide is Allantoicase (allc) (Xenopus tropicalis (Western clawed frog)).